The primary structure comprises 122 residues: Large ribosomal subunit protein bL12 (122 aa).

It belongs to the bacterial ribosomal protein bL12 family. Homodimer. Part of the ribosomal stalk of the 50S ribosomal subunit. Forms a multimeric L10(L12)X complex, where L10 forms an elongated spine to which 2 to 4 L12 dimers bind in a sequential fashion. Binds GTP-bound translation factors.

Its function is as follows. Forms part of the ribosomal stalk which helps the ribosome interact with GTP-bound translation factors. Is thus essential for accurate translation. The polypeptide is Large ribosomal subunit protein bL12 (Latilactobacillus sakei subsp. sakei (strain 23K) (Lactobacillus sakei subsp. sakei)).